Here is a 255-residue protein sequence, read N- to C-terminus: Taurine import ATP-binding protein TauB (255 aa).

In terms of domain architecture, ABC transporter spans 2 to 229 (LQISHLYADY…RFVAGESSRS (228 aa)). 34 to 41 (GPSGCGKT) lines the ATP pocket.

Belongs to the ABC transporter superfamily. Taurine importer (TC 3.A.1.17.1) family. In terms of assembly, the complex is composed of two ATP-binding proteins (TauB), two transmembrane proteins (TauC) and a solute-binding protein (TauA).

Its subcellular location is the cell inner membrane. The catalysed reaction is taurine(out) + ATP + H2O = taurine(in) + ADP + phosphate + H(+). Its function is as follows. Part of the ABC transporter complex TauABC involved in taurine import. Responsible for energy coupling to the transport system. This is Taurine import ATP-binding protein TauB from Shigella flexneri.